A 364-amino-acid polypeptide reads, in one-letter code: Apelin receptor (364 aa).

Residues 1 to 39 (MATDEFSSSTTPSYDYYDYTNESGLPPCDETDWDLSYSL) lie on the Extracellular side of the membrane. Residue Asn-21 is glycosylated (N-linked (GlcNAc...) asparagine). Disulfide bonds link Cys-28–Cys-288 and Cys-110–Cys-187. The helical transmembrane segment at 40–60 (LPVFYMIVFVLGLSGNGVVIF) threads the bilayer. Over 61 to 78 (TVWKAKPKRRSADTYIGN) the chain is Cytoplasmic. Residues 79 to 99 (LALADLAFVVTLPLWATYTAL) form a helical membrane-spanning segment. Over 100–112 (GFHWPFGSALCKL) the chain is Extracellular. A helical transmembrane segment spans residues 113 to 133 (SSYLVLLNMFASVFCLTCLSF). Residues 134 to 153 (DRYLAIVHSLSSAKLRSRSS) are Cytoplasmic-facing. Residues 154–174 (ILVSLAVIWLFSGLLALPSLI) traverse the membrane as a helical segment. At 175–201 (LRDTRVEGNNTICDLDFSGVSSKENEN) the chain is on the extracellular side. Asn-183 is a glycosylation site (N-linked (GlcNAc...) asparagine). A helical membrane pass occupies residues 202–222 (FWIGGLSILTTVPGFLLPLLL). Residues 223-250 (MTIFYCFIGGKVTMHFQNLKKEEQKKKR) are Cytoplasmic-facing. The helical transmembrane segment at 251–271 (LLKIIITLVVVFAICWLPFHI) threads the bilayer. The Extracellular segment spans residues 272 to 298 (LKTIHFLDLMGFLELSCSTQNIIVSLH). A helical transmembrane segment spans residues 299–319 (PYATCLAYINSCLNPFLYAFF). Over 320–364 (DLRFRSQCFFFFGFKKALQGHLSNTSSSLSAQTQKSEIHSLATKV) the chain is Cytoplasmic.

The protein belongs to the G-protein coupled receptor 1 family.

It localises to the cell membrane. G protein-coupled receptor for peptide hormones apelin (apln) and apelin receptor early endogenous ligand (apela), that plays a role in the regulation of normal cardiovascular function and fluid homeostasis. When acting as apelin receptor, activates both G(i) protein pathway that inhibits adenylate cyclase activity, and the beta-arrestin pathway that promotes internalization of the receptor. Also functions as mechanoreceptor that is activated by pathological stimuli in a G-protein-independent fashion to induce beta-arrestin signaling, hence eliciting cardiac hypertrophy. However, the presence of apelin ligand blunts cardiac hypertrophic induction from APLNR/APJ on response to pathological stimuli. Plays a key role in early development such as gastrulation, blood vessels formation and heart morphogenesis by acting as a receptor for apela hormone, promoting endoderm and mesendoderm cell migration and regulating the migration of cells fated to become myocardial progenitors, respectively. Promotes angioblast migration toward the embryonic midline, i.e. the position of the future vessel formation, during vasculogenesis. May promote sinus venosus (SV)-derived endothelial cells migration into the developing heart to promote coronary blood vessel development. Required for cardiovascular development, particularly for intersomitic vein angiogenesis. Plays also a role in various processes in adults such as regulation of blood vessel formation, blood pressure, heart contractility, and heart failure. Acts upstream of the i/o type of G-alpha proteins in the differentiation of endothelium, erythroid cells, myeloid cells and cardiomyocytes. The sequence is that of Apelin receptor (aplnr) from Xenopus tropicalis (Western clawed frog).